The chain runs to 703 residues: Pinin (703 aa).

Alanine 2 bears the N-acetylalanine mark. A coiled-coil region spans residues 2–32 (AVAVRTLQEQLEKAKESLKNVDENIRKLTGR). A disordered region spans residues 46 to 148 (ALSGPGGGRG…ETPERPGPIF (103 aa)). A Phosphoserine modification is found at serine 48. Arginine 54 bears the Omega-N-methylarginine mark. Residues serine 58, serine 66, serine 96, and serine 100 each carry the phosphoserine modification. A compositionally biased stretch (basic and acidic residues) spans 87-100 (GGERRTRRESRQES). Lysine 109 is covalently cross-linked (Glycyl lysine isopeptide (Lys-Gly) (interchain with G-Cter in SUMO2)). Phosphoserine is present on residues serine 114 and serine 115. A Glycyl lysine isopeptide (Lys-Gly) (interchain with G-Cter in SUMO2) cross-link involves residue lysine 121. Threonine 125 bears the Phosphothreonine mark. Glycyl lysine isopeptide (Lys-Gly) (interchain with G-Cter in SUMO2) cross-links involve residues lysine 138 and lysine 157. Lysine 159 is covalently cross-linked (Glycyl lysine isopeptide (Lys-Gly) (interchain with G-Cter in SUMO1); alternate). Lysine 159 participates in a covalent cross-link: Glycyl lysine isopeptide (Lys-Gly) (interchain with G-Cter in SUMO2); alternate. A coiled-coil region spans residues 165 to 236 (ATERQKRRQE…HNAKIIKYIR (72 aa)). Positions 223 to 285 (EWNEHNAKII…AEQINKMEAR (63 aa)) are sufficient for PSAP complex assembly. A Glycyl lysine isopeptide (Lys-Gly) (interchain with G-Cter in SUMO2) cross-link involves residue lysine 230. The residue at position 240 (lysine 240) is an N6-acetyllysine; alternate. At lysine 240 the chain carries N6-succinyllysine; alternate. Glycyl lysine isopeptide (Lys-Gly) (interchain with G-Cter in SUMO2) cross-links involve residues lysine 281, lysine 306, and lysine 313. Disordered regions lie at residues 284 to 314 (ARPR…EGKV), 331 to 394 (RVGT…EEVM), and 408 to 703 (AEQE…PGQL). Composition is skewed to basic and acidic residues over residues 348 to 357 (EIPIVHSDAE) and 366 to 386 (KQEM…EKQQ). Serine 354 carries the post-translational modification Phosphoserine. A coiled-coil region spans residues 354–411 (SDAEKEQEEEEQKQEMEVKMEEETEVRESEKQQDSQPEEVMDVLEMVESVKNVIAEQE). Residues lysine 366 and lysine 372 each participate in a glycyl lysine isopeptide (Lys-Gly) (interchain with G-Cter in SUMO2) cross-link. Serine 382 and serine 388 each carry phosphoserine. Residues 417 to 433 (QVERVEPSENEASKELE) are compositionally biased toward basic and acidic residues. Residues serine 450 and serine 457 each carry the phosphoserine modification. The span at 479–489 (PMAQPQAQSLP) shows a compositional bias: low complexity. Residues lysine 541 and lysine 549 each participate in a glycyl lysine isopeptide (Lys-Gly) (interchain with G-Cter in SUMO2) cross-link. Residue serine 565 is modified to Phosphoserine. Lysine 566 participates in a covalent cross-link: Glycyl lysine isopeptide (Lys-Gly) (interchain with G-Cter in SUMO2). Residues 572–588 (RSRSRGRARNRTSKSRS) are compositionally biased toward basic residues. Residues 589 to 642 (RSSSSSSSSSSSTSSSSGSSSSSGSSSSRTSSSSSSTSGSSSRDSSSSTTSSSE) are compositionally biased toward low complexity. Over residues 646-664 (RSRGRGHNRDRKHRRSVDR) the composition is skewed to basic residues. A compositionally biased stretch (basic and acidic residues) spans 665-676 (KRRDASGLERSH). Phosphoserine occurs at positions 670 and 691.

The protein belongs to the pinin family. As to quaternary structure, found in a mRNA splicing-dependent exon junction complex (EJC). Found in a complex with SR proteins. Found in a mRNP complex with RNPS1. Component of the PSAP complex consisting of RNPS1, SAP18 and PNN. Interacts with PNISR, CTBP1, CTBP2, KRT8, KRT18, KRT19, PS1D/PNO40, PPIG, RNPS1, SFRS4 and SRRM2. Identified in the spliceosome C complex.

It is found in the nucleus speckle. Its subcellular location is the cell junction. The protein resides in the desmosome. Transcriptional activator binding to the E-box 1 core sequence of the E-cadherin promoter gene; the core-binding sequence is 5'CAGGTG-3'. Capable of reversing CTBP1-mediated transcription repression. Auxiliary component of the splicing-dependent multiprotein exon junction complex (EJC) deposited at splice junction on mRNAs. The EJC is a dynamic structure consisting of core proteins and several peripheral nuclear and cytoplasmic associated factors that join the complex only transiently either during EJC assembly or during subsequent mRNA metabolism. Participates in the regulation of alternative pre-mRNA splicing. Associates to spliced mRNA within 60 nt upstream of the 5'-splice sites. Component of the PSAP complex which binds RNA in a sequence-independent manner and is proposed to be recruited to the EJC prior to or during the splicing process and to regulate specific excision of introns in specific transcription subsets. Involved in the establishment and maintenance of epithelia cell-cell adhesion. The sequence is that of Pinin (PNN) from Bos taurus (Bovine).